The chain runs to 113 residues: Hydrogenase maturation factor HypA (113 aa).

H2 serves as a coordination point for Ni(2+). Positions 73, 76, 89, and 92 each coordinate Zn(2+).

The protein belongs to the HypA/HybF family.

Involved in the maturation of [NiFe] hydrogenases. Required for nickel insertion into the metal center of the hydrogenase. The protein is Hydrogenase maturation factor HypA of Albidiferax ferrireducens (strain ATCC BAA-621 / DSM 15236 / T118) (Rhodoferax ferrireducens).